The chain runs to 380 residues: Lipid-A-disaccharide synthase (380 aa).

Belongs to the LpxB family.

The enzyme catalyses a lipid X + a UDP-2-N,3-O-bis[(3R)-3-hydroxyacyl]-alpha-D-glucosamine = a lipid A disaccharide + UDP + H(+). It functions in the pathway bacterial outer membrane biogenesis; LPS lipid A biosynthesis. Functionally, condensation of UDP-2,3-diacylglucosamine and 2,3-diacylglucosamine-1-phosphate to form lipid A disaccharide, a precursor of lipid A, a phosphorylated glycolipid that anchors the lipopolysaccharide to the outer membrane of the cell. The chain is Lipid-A-disaccharide synthase from Francisella tularensis subsp. tularensis (strain FSC 198).